We begin with the raw amino-acid sequence, 393 residues long: tRNA(Met) cytidine acetate ligase (393 aa).

The ATP site is built by Gly81, Asn142, and Arg167.

This sequence belongs to the TmcAL family.

The protein resides in the cytoplasm. It carries out the reaction cytidine(34) in elongator tRNA(Met) + acetate + ATP = N(4)-acetylcytidine(34) in elongator tRNA(Met) + AMP + diphosphate. In terms of biological role, catalyzes the formation of N(4)-acetylcytidine (ac(4)C) at the wobble position of elongator tRNA(Met), using acetate and ATP as substrates. First activates an acetate ion to form acetyladenylate (Ac-AMP) and then transfers the acetyl group to tRNA to form ac(4)C34. The sequence is that of tRNA(Met) cytidine acetate ligase from Bacillus mycoides (strain KBAB4) (Bacillus weihenstephanensis).